The primary structure comprises 537 residues: Prolyl 4-hydroxylase subunit alpha-2 (537 aa).

An N-terminal signal peptide occupies residues 1 to 23 (MKLQVLVLVLLMSWFGVLSWVQA). Asn117 carries N-linked (GlcNAc...) asparagine glycosylation. A TPR repeat occupies 209-242 (SLVLDYLSYAVFQLGDLHRAVELTRRLLSLDPSH). Residue Asn266 is glycosylated (N-linked (GlcNAc...) asparagine). A Fe2OG dioxygenase domain is found at 414-522 (TAELLQVANY…KWVSNKWFHE (109 aa)). Fe cation-binding residues include His432 and Asp434. Lys482 is subject to N6-succinyllysine. Residue His503 coordinates Fe cation. Lys513 is a 2-oxoglutarate binding site.

The protein belongs to the P4HA family. In terms of assembly, heterotetramer of two alpha-2 chains and two beta chains (P4HB) (the beta chain is the multi-functional PDI), where P4HB plays the role of a structural subunit; this tetramer catalyzes the formation of 4-hydroxyproline in collagen. Requires Fe(2+) as cofactor. The cofactor is L-ascorbate. Expressed at least in brain, heart and lung.

It is found in the endoplasmic reticulum lumen. The catalysed reaction is L-prolyl-[collagen] + 2-oxoglutarate + O2 = trans-4-hydroxy-L-prolyl-[collagen] + succinate + CO2. Inhibited by poly(L-proline) only at very high concentrations. In terms of biological role, catalyzes the post-translational formation of 4-hydroxyproline in -Xaa-Pro-Gly- sequences in collagens and other proteins. This Mus musculus (Mouse) protein is Prolyl 4-hydroxylase subunit alpha-2 (P4ha2).